The sequence spans 216 residues: Ribosomal RNA small subunit methyltransferase G (216 aa).

S-adenosyl-L-methionine-binding residues include Gly75, Leu80, and Arg141.

It belongs to the methyltransferase superfamily. RNA methyltransferase RsmG family.

The protein localises to the cytoplasm. It carries out the reaction guanosine(527) in 16S rRNA + S-adenosyl-L-methionine = N(7)-methylguanosine(527) in 16S rRNA + S-adenosyl-L-homocysteine. In terms of biological role, specifically methylates the N7 position of guanine in position 527 of 16S rRNA. This Nitrosospira multiformis (strain ATCC 25196 / NCIMB 11849 / C 71) protein is Ribosomal RNA small subunit methyltransferase G.